The primary structure comprises 337 residues: Glucokinase (337 aa).

Residue 11 to 16 (ADIGGT) participates in ATP binding.

Belongs to the bacterial glucokinase family.

It is found in the cytoplasm. The catalysed reaction is D-glucose + ATP = D-glucose 6-phosphate + ADP + H(+). The protein is Glucokinase of Xylella fastidiosa (strain M23).